The primary structure comprises 84 residues: Putative defensin-like protein 63 (84 aa).

The signal sequence occupies residues 1-21; sequence MDIRKTYVIIFFVGILTISFS. Disulfide bonds link Cys40-Cys81, Cys44-Cys67, Cys53-Cys79, and Cys57-Cys80.

The protein belongs to the DEFL family.

The protein localises to the secreted. This is Putative defensin-like protein 63 from Arabidopsis thaliana (Mouse-ear cress).